The chain runs to 497 residues: UDP-N-acetylmuramoyl-L-alanyl-D-glutamate--2,6-diaminopimelate ligase (497 aa).

Serine 29 is a UDP-N-acetyl-alpha-D-muramoyl-L-alanyl-D-glutamate binding site. 116-122 (GTNGKTT) lines the ATP pocket. Residues asparagine 157, 158–159 (TT), serine 185, glutamine 191, and arginine 193 each bind UDP-N-acetyl-alpha-D-muramoyl-L-alanyl-D-glutamate. Lysine 225 bears the N6-carboxylysine mark. Meso-2,6-diaminopimelate contacts are provided by residues arginine 392, 416–419 (DNPR), glycine 467, and glutamate 471. Residues 416–419 (DNPR) carry the Meso-diaminopimelate recognition motif motif.

It belongs to the MurCDEF family. MurE subfamily. The cofactor is Mg(2+). Carboxylation is probably crucial for Mg(2+) binding and, consequently, for the gamma-phosphate positioning of ATP.

Its subcellular location is the cytoplasm. The enzyme catalyses UDP-N-acetyl-alpha-D-muramoyl-L-alanyl-D-glutamate + meso-2,6-diaminopimelate + ATP = UDP-N-acetyl-alpha-D-muramoyl-L-alanyl-gamma-D-glutamyl-meso-2,6-diaminopimelate + ADP + phosphate + H(+). The protein operates within cell wall biogenesis; peptidoglycan biosynthesis. In terms of biological role, catalyzes the addition of meso-diaminopimelic acid to the nucleotide precursor UDP-N-acetylmuramoyl-L-alanyl-D-glutamate (UMAG) in the biosynthesis of bacterial cell-wall peptidoglycan. The sequence is that of UDP-N-acetylmuramoyl-L-alanyl-D-glutamate--2,6-diaminopimelate ligase from Buchnera aphidicola subsp. Acyrthosiphon pisum (strain APS) (Acyrthosiphon pisum symbiotic bacterium).